Here is a 234-residue protein sequence, read N- to C-terminus: Uridylate kinase (234 aa).

9–12 (KLSG) is a binding site for ATP. Residue glycine 51 coordinates UMP. Positions 52 and 56 each coordinate ATP. UMP contacts are provided by residues aspartate 71 and 132–139 (CGNPFFTT). ATP-binding residues include threonine 159, tyrosine 165, and aspartate 168.

This sequence belongs to the UMP kinase family. As to quaternary structure, homohexamer.

Its subcellular location is the cytoplasm. It catalyses the reaction UMP + ATP = UDP + ADP. Its pathway is pyrimidine metabolism; CTP biosynthesis via de novo pathway; UDP from UMP (UMPK route): step 1/1. With respect to regulation, inhibited by UTP. Catalyzes the reversible phosphorylation of UMP to UDP. This is Uridylate kinase from Prochlorococcus marinus (strain MIT 9215).